An 807-amino-acid chain; its full sequence is MSTGHTIYHSLLKLPLSVMVKSSSIPSNPIEDLNIDLERPIIYALPFRSHVDLLTLQKSALELGLPDPLSPIEIEGVKYPRYVFTSIGPKMFDTDDDLPQESLDLFKIVLKHHADNPDADFQLIPTSILWGRKPGKEGTSKPHLMPLNGPQKFVTLIKAGRDSTVRISPVVSLRYMADNHGSDEAIAHKLARVAKIHFSRQKLAASGPNLPNRQALFNRLLKSQAIEKVILEEAKSRNVDVEKVRKEAMGIMEEIATNFSYSLIKNGNRILKWLWNRLYQGLNINNASTVRKLAQEGHEIVYVPCHRSHMDYLLLSYVLYHEGLVPPHIAAGINLNFFPAGPIFRRGGAFFIRRSFKGNRLYSTIFREYLAELFAKGYSVEYFSEGGRSRTGRLLQAKTGMLAMTVQAMLRGLNRPVTLVPVYIGYEHVMEVTTYAKELRGKRKEKENAGQVLRTLRKLRNFGQGYVNFGEPISLNHYLNEHAPNWSESINPIEPQKPEWMTPVVNGIANKMMTHINDAAAANALTLCATALLAANQRALSKEDLTEQLDCYLQILRNVPYSATATVPSEDADALLEHAIKLDKFVIEKDTLGEIVSLDRNQSLLMTYYRNNIIHLFALPSLIAKLVVHHDTITVEQIQEQIKLIYPFLKAELFLHYEEDELASIVNNHIDELVQQNLILRDGDTLQLCNANIRKLHLLAHTISETLQRYAIALTHLQASPDLGKDELEEQSQIMAQRLSRLHGINAPEFFDKGVFCILFNTLKTEGYLDEDGAAVLSKVEPLSQDIAHLLTPEIKLTIHAVMTKED.

The HXXXXD motif signature appears at 305-310 (CHRSHM).

It belongs to the GPAT/DAPAT family.

It localises to the cell inner membrane. The catalysed reaction is sn-glycerol 3-phosphate + an acyl-CoA = a 1-acyl-sn-glycero-3-phosphate + CoA. Its pathway is phospholipid metabolism; CDP-diacylglycerol biosynthesis; CDP-diacylglycerol from sn-glycerol 3-phosphate: step 1/3. This is Glycerol-3-phosphate acyltransferase from Aliivibrio fischeri (strain MJ11) (Vibrio fischeri).